We begin with the raw amino-acid sequence, 176 residues long: Large ribosomal subunit protein bL28m (176 aa).

Residues 1–8 (MASKLLRK) constitute a mitochondrion transit peptide.

It belongs to the bacterial ribosomal protein bL28 family. As to quaternary structure, component of the mitochondrial large ribosomal subunit (mt-LSU). Mature yeast 74S mitochondrial ribosomes consist of a small (37S) and a large (54S) subunit. The 37S small subunit contains a 15S ribosomal RNA (15S mt-rRNA) and at least 32 different proteins. The 54S large subunit contains a 21S rRNA (21S mt-rRNA) and at least 45 different proteins.

The protein resides in the cytoplasm. Its subcellular location is the mitochondrion. Functionally, component of the mitochondrial ribosome (mitoribosome), a dedicated translation machinery responsible for the synthesis of mitochondrial genome-encoded proteins, including at least some of the essential transmembrane subunits of the mitochondrial respiratory chain. The mitoribosomes are attached to the mitochondrial inner membrane and translation products are cotranslationally integrated into the membrane. This is Large ribosomal subunit protein bL28m (mrpl24) from Schizosaccharomyces pombe (strain 972 / ATCC 24843) (Fission yeast).